The chain runs to 555 residues: Formate--tetrahydrofolate ligase (555 aa).

Residue 64–71 participates in ATP binding; sequence TKAGIGKT.

Belongs to the formate--tetrahydrofolate ligase family.

It carries out the reaction (6S)-5,6,7,8-tetrahydrofolate + formate + ATP = (6R)-10-formyltetrahydrofolate + ADP + phosphate. It participates in one-carbon metabolism; tetrahydrofolate interconversion. The sequence is that of Formate--tetrahydrofolate ligase from Phocaeicola vulgatus (strain ATCC 8482 / DSM 1447 / JCM 5826 / CCUG 4940 / NBRC 14291 / NCTC 11154) (Bacteroides vulgatus).